The chain runs to 443 residues: Thymidine phosphorylase (443 aa).

It belongs to the thymidine/pyrimidine-nucleoside phosphorylase family. In terms of assembly, homodimer.

The enzyme catalyses thymidine + phosphate = 2-deoxy-alpha-D-ribose 1-phosphate + thymine. Its pathway is pyrimidine metabolism; dTMP biosynthesis via salvage pathway; dTMP from thymine: step 1/2. Its function is as follows. The enzymes which catalyze the reversible phosphorolysis of pyrimidine nucleosides are involved in the degradation of these compounds and in their utilization as carbon and energy sources, or in the rescue of pyrimidine bases for nucleotide synthesis. In Shewanella amazonensis (strain ATCC BAA-1098 / SB2B), this protein is Thymidine phosphorylase.